We begin with the raw amino-acid sequence, 313 residues long: MKILLLLIPLVLTACGTLTGIPAHGGGKRFAVEQELVAASSRAAVKEMDLSALKGRKAALYVSVMGDQGSGNISGGRYSIDALIRGGYHNNPESATQYSYPAYDTTATTKSDALSSVTTSTSVLNAPAAALTRNSGRKGERSAGLSVNGTGDYRNETLLANPRDVSFLTNLIQTVFYLRGIEVVPPEYADTDVFVTVDVFGTVRSRTELHLYNAETLKAQTKLEYFAVDRDSRKLLIAPKTAAYESQYQEQYALWMGPYSVGKTVKASDRLMVDFSDITPYGDTTAQNRPDFKQNNGKNPDVGNEVIRRRKGG.

Residues 1–14 form the signal peptide; the sequence is MKILLLLIPLVLTA. Cysteine 15 is lipidated: N-palmitoyl cysteine. Residue cysteine 15 is the site of S-diacylglycerol cysteine attachment. The segment covering 282–298 has biased composition (polar residues); it reads GDTTAQNRPDFKQNNGK. Residues 282–313 form a disordered region; the sequence is GDTTAQNRPDFKQNNGKNPDVGNEVIRRRKGG.

This sequence belongs to the MafA family.

Its subcellular location is the cell outer membrane. This Neisseria meningitidis serogroup C / serotype 2a (strain ATCC 700532 / DSM 15464 / FAM18) protein is Adhesin MafA 1 (mafA1).